The primary structure comprises 153 residues: UPF0756 membrane protein BCQ_4399 (153 aa).

4 consecutive transmembrane segments (helical) span residues 8–28 (FLFI…TVAI), 54–74 (LGVT…EIGF), 87–107 (WIAL…VQLL), and 117–137 (LVFG…GPLI).

It belongs to the UPF0756 family.

The protein localises to the cell membrane. In Bacillus cereus (strain Q1), this protein is UPF0756 membrane protein BCQ_4399.